The sequence spans 1146 residues: MKTAFFQPDIPTQPNDHKILGNVLPGADALAISEISEQNQNLTVVVTPDTRSAVRLSRVLSELSSQDVCLFPDWETLPYDTFSPHQEIISSRLSALFHLQNAKKGIFLLPISTLMQRLCPPQYLQHNVLLIKKGDRLVIDKMRLQLEAAGYRAVEQVLEHGEYAVRGALLDLFPMGSAVPFRLDFFDDEIDSIRTFDVDTQRTLDEISSINLLPAHEFPTDDKGIEFFRAQFRETFGEIRRDPEHIYQQISKGTLISGIEYWQPLFFAEMATLFDYLPEQTLFVDMENNQTQGERFYQDAKQRYEQRKVDPMRPLLSPEKLWLNVDEVNRRLKSYPRITFKAEKVRSSVRQKNLPVAALPEVTIQSQQKEPLGQLRQFIEHFKGNVLFSVETEGRRETLLDLLSPLKLKPKQIQSLEQIENEKFSLLVSSLEQGFIIEQSLPVAIIGEANLLGKRIQQRSRDKRKTINPDTLVRNLAELKIGQPVVHLDHGVGRYGGLVTLDTGGIKAEYLLLNYANESKLYVPVTSLHLISRYVGGSDESAPLHKLGNEAWAKSRQKAAEKIRDVAAELLDVYAQREAKKGFAFKYDREEFQQFSATFPFEETYDQEMAINAVISDMCQPKAMDRLVCGDVGFGKTEVAMRAAFLAVMNHKQVAVLVPTTLLAQQHYENFKDRFANLPVNVEVLSRFKTAKEQKQILENLAEGKVDILIGTHKLIQSDVKFNDLGLLIIDEEHRFGVGQKEKIKQLRANIDILTLTATPIPRTLNMAMNGIRDLSIISTPPARRLSIKTFVRQNDDLVVREAILREILRGGQVYYLHNDVASIENTAEKLTALVPEARVIVGHGQMRERELERVMSDFYHQRYNVLVCSTIIETGIDVPTANTIIIERADHFGLAQLHQLRGRVGRSHHQAYAYLLTPPPKMMTKDAERRLDALENLDNLGAGFILATHDLEIRGAGELLGNEQSGQIESIGFSLYMELLDAAVKALKEGREPSLEELTQQQADIELRVPALLPDDYLGDVNMRLSFYKRIAAAESKAELDELKVELIDRFGLLPDATKNLLQITELRLLVEPLNVVRIDAGTQGGFIEFSAKAQVNPDKFIQLIQKEPIVYRFDGPFKFKFMKDLSDNKVRLEFVVDLLRTIAA.

The Helicase ATP-binding domain occupies 617 to 778 (DMCQPKAMDR…MNGIRDLSII (162 aa)). 630–637 (GDVGFGKT) provides a ligand contact to ATP. Positions 731–734 (DEEH) match the DEEH box motif. Residues 800–953 (VREAILREIL…GFILATHDLE (154 aa)) form the Helicase C-terminal domain.

The protein in the N-terminal section; belongs to the UvrB family. It in the C-terminal section; belongs to the helicase family. RecG subfamily.

The protein resides in the cytoplasm. Its function is as follows. Couples transcription and DNA repair by recognizing RNA polymerase (RNAP) stalled at DNA lesions. Mediates ATP-dependent release of RNAP and its truncated transcript from the DNA, and recruitment of nucleotide excision repair machinery to the damaged site. The protein is Transcription-repair-coupling factor of Haemophilus influenzae (strain ATCC 51907 / DSM 11121 / KW20 / Rd).